Consider the following 854-residue polypeptide: Iron and copper transporter IacT (854 aa).

The TonB box motif lies at 187–194 (IELIVTAQ). The TBDR plug domain occupies 199 to 315 (DAQDVPLSLT…PAGVVNVISR (117 aa)). Residues 320-854 (QPEMRISALY…TYGVRVSASF (535 aa)) enclose the TBDR beta-barrel domain. Residues 839 to 854 (GFGDPVTYGVRVSASF) carry the TonB C-terminal box motif.

It belongs to the TonB-dependent receptor family.

It is found in the cell outer membrane. Its function is as follows. Involved in the TonB-dependent uptake of copper and iron under conditions in which the concentration of copper exceeds that of the iron. In Nostoc sp. (strain PCC 7120 / SAG 25.82 / UTEX 2576), this protein is Iron and copper transporter IacT.